The chain runs to 483 residues: ATP-dependent RNA helicase DDX25 (483 aa).

The short motif at 61 to 74 (LAANSLLNKLIRQS) is the Nuclear export signal element. A Q motif motif is present at residues 97 to 125 (KTFEELRLKEELLKGIYAMGFNRPSKIQE). The Nuclear localization signal motif lies at 100 to 114 (EELRLKEELLKGIYA). The region spanning 130–300 (MMLAHPPQNL…ERIIPDPNVI (171 aa)) is the Helicase ATP-binding domain. ATP is bound at residue 143-150 (SQSGTGKT). The DEAD box signature appears at 247-250 (DEAD). Residues 311–478 (NIRQYYVLCG…QLDPEDMDEI (168 aa)) form the Helicase C-terminal domain.

This sequence belongs to the DEAD box helicase family. In terms of processing, phosphorylated on threonine residues. The phosphorylated form is found in the cytoplasm but not in the nucleus.

It localises to the cytoplasm. The protein resides in the nucleus. It catalyses the reaction ATP + H2O = ADP + phosphate + H(+). Its function is as follows. ATP-dependent RNA helicase. Required for mRNA export and translation regulation during spermatid development. The chain is ATP-dependent RNA helicase DDX25 (DDX25) from Bos taurus (Bovine).